A 1223-amino-acid polypeptide reads, in one-letter code: A disintegrin and metalloproteinase with thrombospondin motifs 14 (1223 aa).

An N-terminal signal peptide occupies residues 1 to 22 (MAPLRALLSYLLPLHCALCAAA). Positions 23-252 (GSRTPELHLS…QLGDTERKRR (230 aa)) are excised as a propeptide. A glycan (N-linked (GlcNAc...) asparagine) is linked at Asn-109. In terms of domain architecture, Peptidase M12B spans 259 to 460 (YSIEVLLVVD…PSYDCLLDDP (202 aa)). Disulfide bonds link Cys-336-Cys-382, Cys-376-Cys-455, and Cys-415-Cys-441. Zn(2+) is bound at residue His-398. The active site involves Glu-399. Residues His-402 and His-408 each coordinate Zn(2+). The 91-residue stretch at 461–551 (FDPAWPQPPE…WKSPEQTYGQ (91 aa)) folds into the Disintegrin domain. The N-linked (GlcNAc...) asparagine glycan is linked to Asn-475. Intrachain disulfides connect Cys-482-Cys-507, Cys-493-Cys-516, Cys-502-Cys-535, Cys-529-Cys-540, Cys-564-Cys-601, Cys-568-Cys-606, and Cys-579-Cys-591. One can recognise a TSP type-1 1 domain in the interval 552–607 (DGGWSSWTKFGSCSRSCGGGVRSRSRSCNNPSPAYGGRLCLGPMFEYQVCNSEECP). A spacer region spans residues 730–846 (LKLVQIPAGA…GSNNVLLEEM (117 aa)). TSP type-1 domains lie at 847–907 (DTYE…HPCS), 908–967 (QPVW…LRVP), and 968–1022 (CPAQ…PACG). N-linked (GlcNAc...) asparagine glycosylation occurs at Asn-941. 3 disulfide bridges follow: Cys-980–Cys-1016, Cys-984–Cys-1021, and Cys-995–Cys-1005. An N-linked (GlcNAc...) asparagine glycan is attached at Asn-1027. The 39-residue stretch at 1059-1097 (STEPCTGDRSVFCQMEVLDRYCSIPGYHRLCCVSCIKKA) folds into the PLAC domain. Residues 1100–1223 (PNPGPDPGPT…TSLPAASPVT (124 aa)) form a disordered region. Positions 1101–1125 (NPGPDPGPTSLPPFSTPGSPLPGPQ) are enriched in pro residues. Basic and acidic residues predominate over residues 1199 to 1211 (PEDKGQPGEDLRH).

In terms of processing, the precursor is cleaved by a furin endopeptidase. Post-translationally, glycosylated. Can be O-fucosylated by POFUT2 on a serine or a threonine residue found within the consensus sequence C1-X(2)-(S/T)-C2-G of the TSP type-1 repeat domains where C1 and C2 are the first and second cysteine residue of the repeat, respectively. Fucosylated repeats can then be further glycosylated by the addition of a beta-1,3-glucose residue by the glucosyltransferase, B3GALTL. Fucosylation mediates the efficient secretion of ADAMTS family members. Can also be C-glycosylated with one or two mannose molecules on tryptophan residues within the consensus sequence W-X-X-W of the TPRs, and N-glycosylated. These other glycosylations can also facilitate secretion. Expressed in retina and at low levels in brain, lung and placenta. High expression in fetal tissues.

It localises to the secreted. The protein localises to the extracellular space. It is found in the extracellular matrix. Its function is as follows. Has aminoprocollagen type I processing activity in the absence of ADAMTS2. Seems to be synthesized as a latent enzyme that requires activation to display aminoprocollagen peptidase activity. Cleaves lysyl oxidase LOX at a site downstream of its propeptide cleavage site to produce a short LOX form. The chain is A disintegrin and metalloproteinase with thrombospondin motifs 14 (ADAMTS14) from Homo sapiens (Human).